A 351-amino-acid chain; its full sequence is Nicotinate-nucleotide--dimethylbenzimidazole phosphoribosyltransferase (351 aa).

Catalysis depends on E319, which acts as the Proton acceptor.

Belongs to the CobT family.

The enzyme catalyses 5,6-dimethylbenzimidazole + nicotinate beta-D-ribonucleotide = alpha-ribazole 5'-phosphate + nicotinate + H(+). It functions in the pathway nucleoside biosynthesis; alpha-ribazole biosynthesis; alpha-ribazole from 5,6-dimethylbenzimidazole: step 1/2. Functionally, catalyzes the synthesis of alpha-ribazole-5'-phosphate from nicotinate mononucleotide (NAMN) and 5,6-dimethylbenzimidazole (DMB). The polypeptide is Nicotinate-nucleotide--dimethylbenzimidazole phosphoribosyltransferase (Desulforamulus reducens (strain ATCC BAA-1160 / DSM 100696 / MI-1) (Desulfotomaculum reducens)).